Consider the following 234-residue polypeptide: Large ribosomal subunit protein uL1 (234 aa).

Belongs to the universal ribosomal protein uL1 family. As to quaternary structure, part of the 50S ribosomal subunit.

In terms of biological role, binds directly to 23S rRNA. The L1 stalk is quite mobile in the ribosome, and is involved in E site tRNA release. Protein L1 is also a translational repressor protein, it controls the translation of the L11 operon by binding to its mRNA. The chain is Large ribosomal subunit protein uL1 from Bdellovibrio bacteriovorus (strain ATCC 15356 / DSM 50701 / NCIMB 9529 / HD100).